The primary structure comprises 107 residues: Putative double-stranded DNA mimic protein Spro_2690 (107 aa).

The protein belongs to the putative dsDNA mimic protein family.

In terms of biological role, may act as a double-stranded DNA (dsDNA) mimic. Probably regulates the activity of a dsDNA-binding protein. The sequence is that of Putative double-stranded DNA mimic protein Spro_2690 from Serratia proteamaculans (strain 568).